Here is a 343-residue protein sequence, read N- to C-terminus: Alpha-tocopherol transfer protein-like (343 aa).

The segment at 1–29 (MSEESDSLRTSPSVASLSENELPLPPPDP) is disordered. Positions 8 to 19 (LRTSPSVASLSE) are enriched in polar residues. Residues 118–283 (RPSALKDVLN…EYGGTAGELD (166 aa)) enclose the CRAL-TRIO domain.

In terms of biological role, may act as a protein that binds a hydrophobic ligand. This is Alpha-tocopherol transfer protein-like (Ttpal) from Mus musculus (Mouse).